Consider the following 185-residue polypeptide: Ribosome-recycling factor (185 aa).

This sequence belongs to the RRF family.

It localises to the cytoplasm. Its function is as follows. Responsible for the release of ribosomes from messenger RNA at the termination of protein biosynthesis. May increase the efficiency of translation by recycling ribosomes from one round of translation to another. The polypeptide is Ribosome-recycling factor (Xylella fastidiosa (strain Temecula1 / ATCC 700964)).